A 391-amino-acid chain; its full sequence is uncharacterized protein (391 aa).

An N-terminal signal peptide occupies residues 1–20 (MRKLFLLSILMIGVIVAFAG). Cys-21 is lipidated: S-archaeol cysteine. The region spanning 104-377 (RIVTDFYCPI…DFAKMIHPEL (274 aa)) is the Fe/B12 periplasmic-binding domain.

Its subcellular location is the cell membrane. This is an uncharacterized protein from Methanocaldococcus jannaschii (strain ATCC 43067 / DSM 2661 / JAL-1 / JCM 10045 / NBRC 100440) (Methanococcus jannaschii).